A 1207-amino-acid polypeptide reads, in one-letter code: Plasma membrane calcium-transporting ATPase 4 (1207 aa).

Residues 1 to 100 are Cytoplasmic-facing; the sequence is MTNPTEHTLP…KTFLELVWEA (100 aa). Residue S13 is modified to Phosphoserine. Residues 101–121 form a helical membrane-spanning segment; that stretch reads LQDVTLIILEIAAIISLVLSF. At 122 to 147 the chain is on the extracellular side; it reads YRPPGGENEQCGLAVTSPEDEGEAEA. A helical transmembrane segment spans residues 148-168; the sequence is GWIEGAAILFSVIIVVLVTAF. Residues 169-368 lie on the Cytoplasmic side of the membrane; the sequence is NDWSKEKQFR…LAVQIGKAGL (200 aa). Residues 294–317 are disordered; sequence EEEKKKKGKKQGVPENRNKAKTQD. Phosphoserine is present on residues S328 and S334. Residues 369-389 traverse the membrane as a helical segment; that stretch reads IMSAITVLILILYFVIDNFVI. At 390–408 the chain is on the extracellular side; it reads QRRPWLAECTPIYVQYFVK. Residues 409-429 form a helical membrane-spanning segment; sequence FFIIGVTVLVVAVPEGLPLAV. Over 430–843 the chain is Cytoplasmic; that stretch reads TISLAYSVKK…RNVYDSISKF (414 aa). D465 serves as the catalytic 4-aspartylphosphate intermediate. Mg(2+) contacts are provided by D785 and D789. Residues 844-864 traverse the membrane as a helical segment; it reads LQFQLTVNVVAVIVAFTGACI. Topologically, residues 865–871 are extracellular; that stretch reads TQDSPLK. The helical transmembrane segment at 872–892 threads the bilayer; it reads AVQMLWVNLIMDTFASLALAT. Topologically, residues 893–918 are cytoplasmic; that stretch reads EPPTDSLLKRRPYGRNKPLISRTMMK. Residues 919–939 form a helical membrane-spanning segment; sequence NILGHAVYQLTVIFFLVFAGE. The Extracellular segment spans residues 940 to 957; it reads KFFDIDSGRRAPLHSPPS. Residues 958–977 traverse the membrane as a helical segment; the sequence is QHYTIIFNTFVLMQLFNEIN. At 978–994 the chain is on the cytoplasmic side; sequence SRKIHGERNVFSGIFRN. A helical transmembrane segment spans residues 995-1015; that stretch reads LIFCSVVLGTFISQIIIVEFG. Topologically, residues 1016–1028 are extracellular; sequence GKPFSCTKLTLSQ. A helical transmembrane segment spans residues 1029–1049; the sequence is WFWCLFIGIGELLWGQVISTI. The Cytoplasmic portion of the chain corresponds to 1050 to 1207; that stretch reads PTQSLKFLKE…SPLHSLETSV (158 aa). The calmodulin-binding subdomain A stretch occupies residues 1086 to 1103; that stretch reads LRRGQILWFRGLNRIQTQ. The residue at position 1102 (T1102) is a Phosphothreonine; by PKC. The calmodulin-binding subdomain B stretch occupies residues 1104–1113; the sequence is IKVVKAFHSS. A disordered region spans residues 1159–1181; the sequence is VSKPGTKTSSLDGEVTPQTNKNN. Residues 1163-1181 are compositionally biased toward polar residues; sequence GTKTSSLDGEVTPQTNKNN.

The protein belongs to the cation transport ATPase (P-type) (TC 3.A.3) family. Type IIB subfamily. In terms of assembly, interacts with PDZD11. Interacts with SLC35G1 and STIM1. Interacts with calmodulin. Isoform 1 is detected in brain, heart, liver, testis and epididymis. Isoform 2 is detected in brain (at protein level), heart, seminal vesicle and epididymis. There is a shift in expression from isoform 1 to isoform 2 along the length of the epididymis from caput to cauda (at protein level).

The protein localises to the cell membrane. The protein resides in the cell projection. It is found in the cilium. Its subcellular location is the flagellum membrane. The enzyme catalyses Ca(2+)(in) + ATP + H2O = Ca(2+)(out) + ADP + phosphate + H(+). Its activity is regulated as follows. Activated by calcium/calmodulin. Its function is as follows. Calcium/calmodulin-regulated and magnesium-dependent enzyme that catalyzes the hydrolysis of ATP coupled with the transport of calcium out of the cell. By regulating sperm cells calcium homeostasis, may play a role in sperm motility. This chain is Plasma membrane calcium-transporting ATPase 4, found in Bos taurus (Bovine).